Here is a 128-residue protein sequence, read N- to C-terminus: Small ribosomal subunit protein uS11 (128 aa).

This sequence belongs to the universal ribosomal protein uS11 family. In terms of assembly, part of the 30S ribosomal subunit. Interacts with proteins S7 and S18. Binds to IF-3.

Functionally, located on the platform of the 30S subunit, it bridges several disparate RNA helices of the 16S rRNA. Forms part of the Shine-Dalgarno cleft in the 70S ribosome. In Synechococcus sp. (strain JA-2-3B'a(2-13)) (Cyanobacteria bacterium Yellowstone B-Prime), this protein is Small ribosomal subunit protein uS11.